The chain runs to 328 residues: GTP 3',8-cyclase (328 aa).

A Radical SAM core domain is found at 1-229 (MNQVDYLRIS…DAQVRGSGPA (229 aa)). R8 is a binding site for GTP. The [4Fe-4S] cluster site is built by C15 and C19. Y21 lines the S-adenosyl-L-methionine pocket. C22 contributes to the [4Fe-4S] cluster binding site. GTP is bound at residue R60. G64 contacts S-adenosyl-L-methionine. T91 is a GTP binding site. Residue S115 participates in S-adenosyl-L-methionine binding. Position 155 (K155) interacts with GTP. Residue M189 participates in S-adenosyl-L-methionine binding. The [4Fe-4S] cluster site is built by C252 and C255. 257–259 (RMR) provides a ligand contact to GTP. C269 provides a ligand contact to [4Fe-4S] cluster.

It belongs to the radical SAM superfamily. MoaA family. As to quaternary structure, monomer and homodimer. Requires [4Fe-4S] cluster as cofactor.

It catalyses the reaction GTP + AH2 + S-adenosyl-L-methionine = (8S)-3',8-cyclo-7,8-dihydroguanosine 5'-triphosphate + 5'-deoxyadenosine + L-methionine + A + H(+). The protein operates within cofactor biosynthesis; molybdopterin biosynthesis. Catalyzes the cyclization of GTP to (8S)-3',8-cyclo-7,8-dihydroguanosine 5'-triphosphate. This chain is GTP 3',8-cyclase, found in Trichormus variabilis (strain ATCC 29413 / PCC 7937) (Anabaena variabilis).